The following is a 362-amino-acid chain: Carbamoyl phosphate synthase pyrimidine-specific small chain (362 aa).

The interval 1–168 (MKRQLILEDG…TRDPYHVPGP (168 aa)) is CPSase. L-glutamine-binding residues include Ser45, Gly219, and Gly221. A Glutamine amidotransferase type-1 domain is found at 171–358 (RVVLVDYGMK…IKLMESNKHR (188 aa)). The active-site Nucleophile is Cys246. Positions 247, 250, 288, 290, and 291 each coordinate L-glutamine. Residues His331 and Glu333 contribute to the active site.

Belongs to the CarA family. As to quaternary structure, composed of two chains; the small (or glutamine) chain promotes the hydrolysis of glutamine to ammonia, which is used by the large (or ammonia) chain to synthesize carbamoyl phosphate. Tetramer of heterodimers (alpha,beta)4.

The catalysed reaction is hydrogencarbonate + L-glutamine + 2 ATP + H2O = carbamoyl phosphate + L-glutamate + 2 ADP + phosphate + 2 H(+). The enzyme catalyses L-glutamine + H2O = L-glutamate + NH4(+). The protein operates within pyrimidine metabolism; UMP biosynthesis via de novo pathway; (S)-dihydroorotate from bicarbonate: step 1/3. Small subunit of the glutamine-dependent carbamoyl phosphate synthetase (CPSase). CPSase catalyzes the formation of carbamoyl phosphate from the ammonia moiety of glutamine, carbonate, and phosphate donated by ATP, constituting the first step of the biosynthetic pathway leading to pyrimidine nucleotides. The small subunit (glutamine amidotransferase) binds and cleaves glutamine to supply the large subunit with the substrate ammonia. This chain is Carbamoyl phosphate synthase pyrimidine-specific small chain, found in Halalkalibacterium halodurans (strain ATCC BAA-125 / DSM 18197 / FERM 7344 / JCM 9153 / C-125) (Bacillus halodurans).